The chain runs to 399 residues: uncharacterized protein (399 aa).

Transmembrane regions (helical) follow at residues 7–27 (FSALRGLAMGIFSPIWILYLI), 33–53 (FLQIGLMGAVLEIAKLIFEVP), 79–99 (AFFPFIDSAAICILAMIIWAL), 131–151 (LLITFLIIGSIASGYLYSLNI), 153–173 (FPFLLVMVIYLLLFIWMSVFI), 208–228 (VLLIVIAGFFTATAYDTISRY), 242–262 (SLGYIFALGGFTALVLLTLTI), 296–316 (PLGIPCTAFLLAIEDIHHPIV), 335–355 (LNSGVGAIGEILSGVIFGIIS), and 357–377 (AFGLSAMFVVVAVFLLIPIIL).

Belongs to the major facilitator superfamily. Drug:H(+) antiporter-3 (DHA3) (TC 2.A.1.21) family.

It is found in the cell membrane. This is an uncharacterized protein from Bacillus subtilis (strain 168).